We begin with the raw amino-acid sequence, 94 residues long: Co-chaperonin GroES (94 aa).

This sequence belongs to the GroES chaperonin family. In terms of assembly, heptamer of 7 subunits arranged in a ring. Interacts with the chaperonin GroEL.

The protein resides in the cytoplasm. Its function is as follows. Together with the chaperonin GroEL, plays an essential role in assisting protein folding. The GroEL-GroES system forms a nano-cage that allows encapsulation of the non-native substrate proteins and provides a physical environment optimized to promote and accelerate protein folding. GroES binds to the apical surface of the GroEL ring, thereby capping the opening of the GroEL channel. The polypeptide is Co-chaperonin GroES (Lactococcus lactis subsp. lactis (strain IL1403) (Streptococcus lactis)).